A 208-amino-acid chain; its full sequence is Uracil phosphoribosyltransferase (208 aa).

Residues R78, R103, and 130 to 138 (DPMLATANS) contribute to the 5-phospho-alpha-D-ribose 1-diphosphate site. Uracil is bound by residues I193 and 198-200 (GDA). 5-phospho-alpha-D-ribose 1-diphosphate is bound at residue D199.

It belongs to the UPRTase family. Mg(2+) serves as cofactor.

The catalysed reaction is UMP + diphosphate = 5-phospho-alpha-D-ribose 1-diphosphate + uracil. It participates in pyrimidine metabolism; UMP biosynthesis via salvage pathway; UMP from uracil: step 1/1. With respect to regulation, allosterically activated by GTP. In terms of biological role, catalyzes the conversion of uracil and 5-phospho-alpha-D-ribose 1-diphosphate (PRPP) to UMP and diphosphate. In Brucella ovis (strain ATCC 25840 / 63/290 / NCTC 10512), this protein is Uracil phosphoribosyltransferase.